Consider the following 456-residue polypeptide: Cysteine synthase 2 (456 aa).

The chain crosses the membrane as a helical span at residues 9–29; it reads VYGTVALTAAFAAGILVTLGF.

Belongs to the cysteine synthase/cystathionine beta-synthase family. Pyridoxal 5'-phosphate is required as a cofactor.

It localises to the mitochondrion outer membrane. It catalyses the reaction O-acetyl-L-serine + hydrogen sulfide = L-cysteine + acetate. In terms of biological role, putative cysteine synthase that catalyzes the conversion of O-acetyl-L-serine (OAS) into cysteine, the last step in the cysteine biosynthesis pathway. However, in contrast to cysteine synthase cys-17, this CS-like protein may not function in cysteine biosynthesis. This chain is Cysteine synthase 2, found in Neurospora crassa (strain ATCC 24698 / 74-OR23-1A / CBS 708.71 / DSM 1257 / FGSC 987).